The primary structure comprises 177 residues: UPF0114 protein HPP12_0190 (177 aa).

A run of 4 helical transmembrane segments spans residues 15-35 (WLLAPLCIAMSLVLVVLGYAF), 54-74 (LVLSALGLVDLLFMAGLVLMV), 102-122 (FNALKLKVSLSIVAISAIFLL), and 145-165 (PIFWQVVINLVFVCSALLAAV).

Belongs to the UPF0114 family.

It is found in the cell membrane. In Helicobacter pylori (strain P12), this protein is UPF0114 protein HPP12_0190.